A 33-amino-acid chain; its full sequence is Lysozyme C, spleen isozyme (33 aa).

Belongs to the glycosyl hydrolase 22 family. As to quaternary structure, monomer.

It catalyses the reaction Hydrolysis of (1-&gt;4)-beta-linkages between N-acetylmuramic acid and N-acetyl-D-glucosamine residues in a peptidoglycan and between N-acetyl-D-glucosamine residues in chitodextrins.. Functionally, lysozymes have primarily a bacteriolytic function; those in tissues and body fluids are associated with the monocyte-macrophage system and enhance the activity of immunoagents. The chain is Lysozyme C, spleen isozyme from Equus caballus (Horse).